Consider the following 38-residue polypeptide: Conotoxin FVIA (38 aa).

Positions 1–12 (ILSLSLLDRSTR) are excised as a propeptide. 3 cysteine pairs are disulfide-bonded: C13–C28, C20–C32, and C27–C37. Cysteine amide is present on C37.

Belongs to the conotoxin O1 superfamily. Expressed by the venom duct.

The protein localises to the secreted. Its function is as follows. Omega-conotoxins act at presynaptic membranes, they bind and block voltage-gated calcium channels (Cav). This peptide reversibly and selectively inhibits Cav2.2/CACNA1B (IC(50)=11.5 nM) voltage-gated calcium channels. Channel time recovery after toxin exposure is short (about 50 seconds). In vivo, it effectively and dose-dependently reduces nociceptive behavior in the formalin test and in neuropathic pain models, and reduces mechanical and thermal allodynia in the tail nerve injury rat model. It also shows significant analgesic effects on writhing in mouse neurotransmitter- and cytokine-induced pain models, though it has no effect on acute thermal pain and interferon-gamma-induced pain. It also depresses blood pressure immediately after administration, but pressure recovers relatively quickly and completely. This Conus fulmen (Thunderbolt cone) protein is Conotoxin FVIA.